The sequence spans 151 residues: Minor curlin subunit (151 aa).

The signal sequence occupies residues 1-21 (MKNKLLFMMLTILGAPGIATA).

Belongs to the CsgA/CsgB family.

The protein localises to the fimbrium. Its function is as follows. Curlin is the structural subunit of the curli. Curli are coiled surface structures that assemble preferentially at growth temperatures below 37 degrees Celsius. Curli can bind to fibronectin. The minor subunit is the nucleation component of curlin monomers. The protein is Minor curlin subunit (csgB) of Salmonella typhi.